The following is a 315-amino-acid chain: MSESLRIIFAGTPDFAARHLDALLSSGHNVVGVFTQPDRPAGRGKKLMPSPIKVLAEEKGLPVFQPVSLRPQENQQLVADLQADVMVVVAYGLILPKAVLEMPRLGCINVHGSLLPRWRGAAPIQRSLWAGDAETGVTIMQMDVGLDTGDMLYKLSCPITAEDTSGTLYDKLAELGPQGLITTLKQLADGTAKPEVQDETLVTYAEKLSKEEARIDWSLSAAQLERCIRAFNPWPMSWLEIEGQPVKVWKASVIDTATNAAPGTILEANKQGIQVATGDGILNLLSLQPAGKKAMSAQDLLNSRREWFVPGNRLV.

Serine 113–proline 116 is a (6S)-5,6,7,8-tetrahydrofolate binding site.

It belongs to the Fmt family.

It catalyses the reaction L-methionyl-tRNA(fMet) + (6R)-10-formyltetrahydrofolate = N-formyl-L-methionyl-tRNA(fMet) + (6S)-5,6,7,8-tetrahydrofolate + H(+). Functionally, attaches a formyl group to the free amino group of methionyl-tRNA(fMet). The formyl group appears to play a dual role in the initiator identity of N-formylmethionyl-tRNA by promoting its recognition by IF2 and preventing the misappropriation of this tRNA by the elongation apparatus. The protein is Methionyl-tRNA formyltransferase of Escherichia coli O139:H28 (strain E24377A / ETEC).